An 831-amino-acid chain; its full sequence is Probable inactive serine/threonine-protein kinase DDB_G0274613 (831 aa).

The RING-type zinc-finger motif lies at 9-63 (CSICSEEVIDFAAIFSSNKKFGDKACKHNFCVSCLTYLMEYNTRNKKALCCPICR). Residues 83–348 (RKLSSAQIFL…LEEMKLLYQF (266 aa)) are a coiled coil. Residues 414–787 (QIHKVSIGNG…ANQAAFHKFF (374 aa)) enclose the Protein kinase domain. Residues 657 to 703 (NNNNNNNNNNNNNNNNNNNNNNNNNNNNNNNNNNNNNNNNNIESNFN) are disordered.

The protein belongs to the protein kinase superfamily. CMGC Ser/Thr protein kinase family.

The chain is Probable inactive serine/threonine-protein kinase DDB_G0274613 from Dictyostelium discoideum (Social amoeba).